A 209-amino-acid chain; its full sequence is FMN-dependent NADH:quinone oxidoreductase (209 aa).

Residues S9 and 15–17 contribute to the FMN site; that span reads SNS.

This sequence belongs to the azoreductase type 1 family. Homodimer. FMN is required as a cofactor.

It carries out the reaction 2 a quinone + NADH + H(+) = 2 a 1,4-benzosemiquinone + NAD(+). It catalyses the reaction N,N-dimethyl-1,4-phenylenediamine + anthranilate + 2 NAD(+) = 2-(4-dimethylaminophenyl)diazenylbenzoate + 2 NADH + 2 H(+). Functionally, quinone reductase that provides resistance to thiol-specific stress caused by electrophilic quinones. In terms of biological role, also exhibits azoreductase activity. Catalyzes the reductive cleavage of the azo bond in aromatic azo compounds to the corresponding amines. This Bordetella bronchiseptica (strain ATCC BAA-588 / NCTC 13252 / RB50) (Alcaligenes bronchisepticus) protein is FMN-dependent NADH:quinone oxidoreductase.